The sequence spans 447 residues: SNF1-related protein kinase regulatory subunit gamma-1-like (447 aa).

Ala2 bears the N-acetylalanine mark. Ser35 is subject to Phosphoserine. 4 consecutive CBS domains span residues 54 to 120, 214 to 275, 292 to 350, and 374 to 433; these read QVPG…SAEL, SFRW…GRDW, MSPN…PEVF, and LAIP…PNYF.

The protein belongs to the 5'-AMP-activated protein kinase gamma subunit family. In terms of assembly, subunit of a probable heterotrimeric complex consisting of an alpha catalytic (KIN10 or KIN11) subunit, and a beta (KINB) and a gamma (KING or SNF4) non-catalytic regulatory subunits.

In terms of biological role, regulatory subunit of the probable trimeric SNF1-related protein kinase (SnRK) complex, which may play a role in a signal transduction cascade regulating gene expression and carbohydrate metabolism in higher plants. The chain is SNF1-related protein kinase regulatory subunit gamma-1-like (CBSCBS2) from Arabidopsis thaliana (Mouse-ear cress).